Reading from the N-terminus, the 554-residue chain is Hydroxylamine reductase (554 aa).

C3, C6, C18, and C25 together coordinate [2Fe-2S] cluster. Residues H252, E276, C320, C408, C436, C461, E495, and K497 each contribute to the hybrid [4Fe-2O-2S] cluster site. Cysteine persulfide is present on C408.

The protein belongs to the HCP family. [2Fe-2S] cluster serves as cofactor. The cofactor is hybrid [4Fe-2O-2S] cluster.

Its subcellular location is the cytoplasm. The enzyme catalyses A + NH4(+) + H2O = hydroxylamine + AH2 + H(+). Catalyzes the reduction of hydroxylamine to form NH(3) and H(2)O. This chain is Hydroxylamine reductase, found in Shewanella baltica (strain OS223).